Reading from the N-terminus, the 245-residue chain is Ribonuclease 3 (245 aa).

One can recognise an RNase III domain in the interval 17–146 (FTDKMKSLGL…FVGALYLDQG (130 aa)). E59 is a Mg(2+) binding site. D63 is a catalytic residue. Residues D132 and E135 each contribute to the Mg(2+) site. The active site involves E135. Positions 172-241 (DFKTQFQEYV…AEQAYKLMKN (70 aa)) constitute a DRBM domain.

The protein belongs to the ribonuclease III family. As to quaternary structure, homodimer. Requires Mg(2+) as cofactor.

It localises to the cytoplasm. It carries out the reaction Endonucleolytic cleavage to 5'-phosphomonoester.. In terms of biological role, digests double-stranded RNA. Involved in the processing of primary rRNA transcript to yield the immediate precursors to the large and small rRNAs (23S and 16S). Processes some mRNAs, and tRNAs when they are encoded in the rRNA operon. Processes pre-crRNA and tracrRNA of type II CRISPR loci if present in the organism. The protein is Ribonuclease 3 of Staphylococcus epidermidis (strain ATCC 12228 / FDA PCI 1200).